The sequence spans 331 residues: Adenosine deaminase (331 aa).

Zn(2+)-binding residues include H12 and H14. The substrate site is built by H14, D16, and G170. H197 contacts Zn(2+). The active-site Proton donor is E200. D278 is a Zn(2+) binding site. Substrate is bound at residue D279.

Belongs to the metallo-dependent hydrolases superfamily. Adenosine and AMP deaminases family. Adenosine deaminase subfamily. The cofactor is Zn(2+).

It catalyses the reaction adenosine + H2O + H(+) = inosine + NH4(+). It carries out the reaction 2'-deoxyadenosine + H2O + H(+) = 2'-deoxyinosine + NH4(+). Its function is as follows. Catalyzes the hydrolytic deamination of adenosine and 2-deoxyadenosine. The protein is Adenosine deaminase of Shewanella baltica (strain OS155 / ATCC BAA-1091).